The chain runs to 357 residues: 3-isopropylmalate dehydrogenase (357 aa).

76 to 89 (GPKWDNEPSHNRPE) is a binding site for NAD(+). Substrate is bound by residues arginine 96, arginine 106, arginine 135, and aspartate 223. 3 residues coordinate Mg(2+): aspartate 223, aspartate 247, and aspartate 251. 281–293 (GSAPDIAGQDKAN) is a binding site for NAD(+).

The protein belongs to the isocitrate and isopropylmalate dehydrogenases family. LeuB type 1 subfamily. Homodimer. Mg(2+) is required as a cofactor. The cofactor is Mn(2+).

Its subcellular location is the cytoplasm. The catalysed reaction is (2R,3S)-3-isopropylmalate + NAD(+) = 4-methyl-2-oxopentanoate + CO2 + NADH. It functions in the pathway amino-acid biosynthesis; L-leucine biosynthesis; L-leucine from 3-methyl-2-oxobutanoate: step 3/4. Catalyzes the oxidation of 3-carboxy-2-hydroxy-4-methylpentanoate (3-isopropylmalate) to 3-carboxy-4-methyl-2-oxopentanoate. The product decarboxylates to 4-methyl-2 oxopentanoate. This Helicobacter hepaticus (strain ATCC 51449 / 3B1) protein is 3-isopropylmalate dehydrogenase.